We begin with the raw amino-acid sequence, 93 residues long: HssA/B-like protein 26 (93 aa).

This sequence belongs to the hssA/B family.

In Dictyostelium discoideum (Social amoeba), this protein is HssA/B-like protein 26 (hssl26).